The chain runs to 356 residues: MKLSTSLEMPFRESTDPICSVCNFSSLIAPHFGGLVCSACASFFRRTVALNIHYLCKKDNQCKGMRKNCRACRFESCVKIAGMKRSLVKERKNLNNIPLYILNRRNETGNQGVVRAFVSSNQNRLENRLSLSPLTELPINDEMDVSKILKTTPSSLLKYYVEQVSHGKQFYMNTLNIRTKEELFEIVSYQSKVAAETCRTCPGVDLLDNRDILILRKYFQFSNIWIESTWKYWFSNDFSNDTEKFDIKLMEFIGQVKSTLLISLSRLKFNIFEFTAFKAICIWKLVYHETSRAMKIVAQEHYEGVTKALISYYQTYTLLDSMEIAIRVGEITLLVSSVFQMYHDMAKLYLHMGLPF.

The nuclear receptor DNA-binding region spans 16-90 (DPICSVCNFS…AGMKRSLVKE (75 aa)). NR C4-type zinc fingers lie at residues 19-40 (CSVC…CSAC) and 56-72 (CKKD…CRAC). Residues 144 to 356 (DVSKILKTTP…KLYLHMGLPF (213 aa)) form the NR LBD domain.

The protein belongs to the nuclear hormone receptor family.

It is found in the nucleus. In terms of biological role, orphan nuclear receptor. The protein is Nuclear hormone receptor family member nhr-169 (nhr-169) of Caenorhabditis elegans.